Consider the following 391-residue polypeptide: Testis-expressed protein 9 (391 aa).

Disordered regions lie at residues 1 to 31 and 65 to 85; these read MAGRSLCLTRSSVPGTPFPPPVQQPSTPGPD and QEVRSRPVSTQMKSCDDEDDY. Residues 188–351 adopt a coiled-coil conformation; sequence IGTEAQIRFL…EKQKGELMIG (164 aa).

It localises to the cytoplasm. Its subcellular location is the cytoskeleton. The protein resides in the microtubule organizing center. The protein localises to the centrosome. It is found in the centriolar satellite. This Homo sapiens (Human) protein is Testis-expressed protein 9 (TEX9).